A 985-amino-acid chain; its full sequence is UPF0182 protein Cgl0786/cg0896 (985 aa).

Helical transmembrane passes span 19-39 (VTWI…SVGF), 63-83 (IVLF…AGYF), 115-135 (VMVI…QRSW), 176-196 (SMML…MGGI), 215-235 (TQLA…YWLD), 262-282 (KIIL…AIFL), and 290-310 (LAVV…PLML). Residues 904–944 (KEAQDIEEVDGTATTPSTDETDTDTDQPATETPTAPVSEAE) are disordered. Low complexity predominate over residues 929–939 (DQPATETPTAP).

The protein belongs to the UPF0182 family.

It localises to the cell membrane. The chain is UPF0182 protein Cgl0786/cg0896 from Corynebacterium glutamicum (strain ATCC 13032 / DSM 20300 / JCM 1318 / BCRC 11384 / CCUG 27702 / LMG 3730 / NBRC 12168 / NCIMB 10025 / NRRL B-2784 / 534).